A 211-amino-acid polypeptide reads, in one-letter code: Protein-L-isoaspartate O-methyltransferase (211 aa).

S62 is an active-site residue.

This sequence belongs to the methyltransferase superfamily. L-isoaspartyl/D-aspartyl protein methyltransferase family.

It is found in the cytoplasm. The enzyme catalyses [protein]-L-isoaspartate + S-adenosyl-L-methionine = [protein]-L-isoaspartate alpha-methyl ester + S-adenosyl-L-homocysteine. Its function is as follows. Catalyzes the methyl esterification of L-isoaspartyl residues in peptides and proteins that result from spontaneous decomposition of normal L-aspartyl and L-asparaginyl residues. It plays a role in the repair and/or degradation of damaged proteins. This Shewanella amazonensis (strain ATCC BAA-1098 / SB2B) protein is Protein-L-isoaspartate O-methyltransferase.